The sequence spans 799 residues: Protein translocase subunit SecA (799 aa).

ATP is bound by residues glutamine 85, 103 to 107 (GEGKT), and aspartate 504.

The protein belongs to the SecA family. Monomer and homodimer. Part of the essential Sec protein translocation apparatus which comprises SecA, SecYEG and auxiliary proteins SecDF. Other proteins may also be involved.

Its subcellular location is the cell membrane. It is found in the cytoplasm. The enzyme catalyses ATP + H2O + cellular proteinSide 1 = ADP + phosphate + cellular proteinSide 2.. Its function is as follows. Part of the Sec protein translocase complex. Interacts with the SecYEG preprotein conducting channel. Has a central role in coupling the hydrolysis of ATP to the transfer of proteins into and across the cell membrane, serving as an ATP-driven molecular motor driving the stepwise translocation of polypeptide chains across the membrane. The chain is Protein translocase subunit SecA from Lactobacillus acidophilus (strain ATCC 700396 / NCK56 / N2 / NCFM).